We begin with the raw amino-acid sequence, 124 residues long: Large ribosomal subunit protein bL12 (124 aa).

Residues 102–116 show a composition bias toward basic and acidic residues; it reads MSKEDAEAAKTKLEE. Positions 102–124 are disordered; that stretch reads MSKEDAEAAKTKLEEAGASVELK.

This sequence belongs to the bacterial ribosomal protein bL12 family. As to quaternary structure, homodimer. Part of the ribosomal stalk of the 50S ribosomal subunit. Forms a multimeric L10(L12)X complex, where L10 forms an elongated spine to which 2 to 4 L12 dimers bind in a sequential fashion. Binds GTP-bound translation factors.

Functionally, forms part of the ribosomal stalk which helps the ribosome interact with GTP-bound translation factors. Is thus essential for accurate translation. The sequence is that of Large ribosomal subunit protein bL12 from Chromohalobacter salexigens (strain ATCC BAA-138 / DSM 3043 / CIP 106854 / NCIMB 13768 / 1H11).